The primary structure comprises 2324 residues: Myomegalin (2324 aa).

Coiled coils occupy residues 41–132 (REDV…LVEA), 158–205 (QVKL…LLEE), 238–288 (DSHL…SLKE), and 348–638 (LFCS…NKQA). 2 disordered regions span residues 72 to 96 (TWADEEDLNSQNEAELRRQVEEPQQ) and 205 to 240 (EPGGMEVQPMPKGLPTQQKPDLNETPTTQPSVSDSH). The span at 85–96 (AELRRQVEEPQQ) shows a compositional bias: basic and acidic residues. Over residues 219-238 (PTQQKPDLNETPTTQPSVSD) the composition is skewed to polar residues. Residues 701–747 (PAGATSVGPHHGEQTDQGSTQMPSRDDSTSLTAREEASIPRSTLGDS) are disordered. At threonine 705 the chain carries Phosphothreonine. Residues 724–738 (SRDDSTSLTAREEAS) show a composition bias toward basic and acidic residues. Coiled coils occupy residues 745–822 (GDSD…QLVD), 855–923 (ENRR…EEVL), and 1011–1043 (LRAEIHQPLEEKRKAEAELKELKAQIEEAGFSS). Disordered regions lie at residues 1155–1182 (LPSSEKHQHQEQENMTARPGPRPQSLKL) and 1195–1216 (NKSQAQDSGHQPEFSLPGSTKH). 3 coiled-coil regions span residues 1213 to 1241 (STKHLRSQLAQCRQRYQDLQEKLLISEAT), 1346 to 1384 (TSDDSSLLRKDIRDLKAQLQNAYKVIQNLRSRVRSLSAT), and 1430 to 1455 (GLQAKKNLENLIQRVSQLEAQLPKTG). Disordered regions lie at residues 1540 to 1559 (TDRLTSKFSTKDHKSEKEEA), 1589 to 1610 (RFSSPPSSHAASDSHRSASSTS), 1628 to 1685 (YTHY…IPKP), 1742 to 1773 (APPTSTSTLLSNHTEASSPRYSNPAQPHSPAR), 1857 to 1877 (LSSTARENGSTSHFYSQGLES), and 2081 to 2140 (NQQP…TPPK). The region spanning 1550-1641 (KDHKSEKEEA…EEKKPSPSNS (92 aa)) is the Olduvai domain. Composition is skewed to low complexity over residues 1591–1610 (SSPPSSHAASDSHRSASSTS) and 1637–1646 (SPSNSAASAS). A compositionally biased stretch (polar residues) spans 1743-1767 (PPTSTSTLLSNHTEASSPRYSNPAQ). A coiled-coil region spans residues 1821–2056 (GADLLEEHLG…LRLQLEQQMD (236 aa)). 2 stretches are compositionally biased toward polar residues: residues 2081 to 2090 (NQQPPFQGSA) and 2108 to 2135 (PSNSCSVPGSDSAIISRTNNGSDESAAT). Positions 2248–2274 (EEGNLMEKELLDLRAQVSQQQQLLQST) form a coiled coil.

Interacts with PDE4D. May interact with MAPRE1 and MAPRE3. May form a pericentrosomal complex with AKAP9, CDK5RAP2 and EB1/MAPRE1 in an isoform-specific manner; within this complex, may mediate MAPRE1-binding to CDK5RAP2. Interaction with AKAP9 stabilizes both proteins. May interact with CAMSAP2 in an isoform-specific manner; this interaction is much stronger in the presence of AKAP9. In complex with AKAP9, recruits CAMSAP2 to the Golgi apparatus. May interact with unglycosylated LGALS3BP in an isoform-specific manner; this interaction may connect the pericentrosomal complex to the gamma-tubulin ring complex (gamma-TuRC) to promote microtubule assembly and acetylation. As to expression, abundantly expressed in heart and skeletal muscle and to a lower extent in brain, lung and liver. Expressed in heart, skeletal muscle and testis (at protein level).

Its subcellular location is the cytoplasm. It localises to the cytoskeleton. The protein localises to the microtubule organizing center. It is found in the centrosome. The protein resides in the golgi apparatus. Its function is as follows. Functions as an anchor sequestering components of the cAMP-dependent pathway to Golgi and/or centrosomes. May participate in microtubule dynamics, promoting microtubule assembly, in an isoform-specific manner. Depending upon the cell context, may act at the level of the Golgi apparatus or that of the centrosome. In complex with AKAP9, recruits CAMSAP2 to the Golgi apparatus and tethers non-centrosomal minus-end microtubules to the Golgi, an important step for polarized cell movement. In complex with AKAP9, EB1/MAPRE1 and CDK5RAP2, contributes to microtubules nucleation and extension from the centrosome to the cell periphery, a crucial process for directed cell migration, mitotic spindle orientation and cell-cycle progression. The sequence is that of Myomegalin (Pde4dip) from Rattus norvegicus (Rat).